Consider the following 201-residue polypeptide: MSPDLLGALLVAAGYLAGSIPFGVVLGRLVLGVDVRTVGSGNIGATNVARAGGKKMGVLVLVLDAAKAIVPILVARRVLGGTPHAEFWVTAVAVAAFVGHLFPVWLGFKGGKGVATGLGIFAVLAPWAALAGLVGYAVAYGLTRISSVGSLTGTALCAAGGFATYGPRHPVSWAGLAIALLIFVRHRENIRRLVRGEEKKV.

5 helical membrane passes run 5-25, 55-75, 87-107, 118-138, and 164-184; these read LLGA…FGVV, KMGV…ILVA, FWVT…VWLG, LGIF…GYAV, and TYGP…LIFV.

It belongs to the PlsY family. In terms of assembly, probably interacts with PlsX.

The protein localises to the cell inner membrane. The enzyme catalyses an acyl phosphate + sn-glycerol 3-phosphate = a 1-acyl-sn-glycero-3-phosphate + phosphate. The protein operates within lipid metabolism; phospholipid metabolism. Catalyzes the transfer of an acyl group from acyl-phosphate (acyl-PO(4)) to glycerol-3-phosphate (G3P) to form lysophosphatidic acid (LPA). This enzyme utilizes acyl-phosphate as fatty acyl donor, but not acyl-CoA or acyl-ACP. This chain is Glycerol-3-phosphate acyltransferase, found in Anaeromyxobacter dehalogenans (strain 2CP-1 / ATCC BAA-258).